The chain runs to 361 residues: tRNA-specific 2-thiouridylase MnmA (361 aa).

ATP contacts are provided by residues 9–16 and M35; that span reads GMSGGVDS. Residues 95-97 are interaction with target base in tRNA; that stretch reads NPD. C100 acts as the Nucleophile in catalysis. A disulfide bond links C100 and C196. G124 contacts ATP. The segment at 146 to 148 is interaction with tRNA; it reads KDQ. C196 serves as the catalytic Cysteine persulfide intermediate. The tract at residues 308–309 is interaction with tRNA; sequence RY.

Belongs to the MnmA/TRMU family.

Its subcellular location is the cytoplasm. The enzyme catalyses S-sulfanyl-L-cysteinyl-[protein] + uridine(34) in tRNA + AH2 + ATP = 2-thiouridine(34) in tRNA + L-cysteinyl-[protein] + A + AMP + diphosphate + H(+). Functionally, catalyzes the 2-thiolation of uridine at the wobble position (U34) of tRNA, leading to the formation of s(2)U34. In Nitrosomonas eutropha (strain DSM 101675 / C91 / Nm57), this protein is tRNA-specific 2-thiouridylase MnmA.